The following is a 562-amino-acid chain: T-complex protein 1 subunit epsilon (562 aa).

The protein belongs to the TCP-1 chaperonin family. Heterooligomeric complex of about 850 to 900 kDa that forms two stacked rings, 12 to 16 nm in diameter.

The protein resides in the cytoplasm. Its function is as follows. Molecular chaperone; assists the folding of proteins upon ATP hydrolysis. Known to play a role, in vitro, in the folding of actin and tubulin. In yeast may play a role in mitotic spindle formation. The polypeptide is T-complex protein 1 subunit epsilon (CCT5) (Saccharomyces cerevisiae (strain ATCC 204508 / S288c) (Baker's yeast)).